A 242-amino-acid polypeptide reads, in one-letter code: Protein GrpE (242 aa).

2 disordered regions span residues Met1 to Leu75 and Val93 to Lys136. Low complexity predominate over residues Asp23–Asp37. Acidic residues predominate over residues Ala38–Ala49. Residues Gly50 to Val64 show a composition bias toward polar residues. Residues Leu96–Ser108 show a composition bias toward acidic residues. Residues Tyr124–Gln133 show a composition bias toward basic residues.

Belongs to the GrpE family. In terms of assembly, homodimer.

It localises to the cytoplasm. In terms of biological role, participates actively in the response to hyperosmotic and heat shock by preventing the aggregation of stress-denatured proteins, in association with DnaK and GrpE. It is the nucleotide exchange factor for DnaK and may function as a thermosensor. Unfolded proteins bind initially to DnaJ; upon interaction with the DnaJ-bound protein, DnaK hydrolyzes its bound ATP, resulting in the formation of a stable complex. GrpE releases ADP from DnaK; ATP binding to DnaK triggers the release of the substrate protein, thus completing the reaction cycle. Several rounds of ATP-dependent interactions between DnaJ, DnaK and GrpE are required for fully efficient folding. The chain is Protein GrpE from Haloferax mediterranei (strain ATCC 33500 / DSM 1411 / JCM 8866 / NBRC 14739 / NCIMB 2177 / R-4) (Halobacterium mediterranei).